The sequence spans 430 residues: Enolase (430 aa).

(2R)-2-phosphoglycerate is bound at residue Q165. Catalysis depends on E207, which acts as the Proton donor. Residues D244, E287, and D314 each coordinate Mg(2+). K339, R368, S369, and K390 together coordinate (2R)-2-phosphoglycerate. The Proton acceptor role is filled by K339.

The protein belongs to the enolase family. As to quaternary structure, component of the RNA degradosome, a multiprotein complex involved in RNA processing and mRNA degradation. It depends on Mg(2+) as a cofactor.

It localises to the cytoplasm. It is found in the secreted. The protein resides in the cell surface. It catalyses the reaction (2R)-2-phosphoglycerate = phosphoenolpyruvate + H2O. It functions in the pathway carbohydrate degradation; glycolysis; pyruvate from D-glyceraldehyde 3-phosphate: step 4/5. Its function is as follows. Catalyzes the reversible conversion of 2-phosphoglycerate (2-PG) into phosphoenolpyruvate (PEP). It is essential for the degradation of carbohydrates via glycolysis. The chain is Enolase from Xanthomonas campestris pv. campestris (strain 8004).